We begin with the raw amino-acid sequence, 351 residues long: Glycerol-3-phosphate dehydrogenase 1-like protein (351 aa).

Position 12–17 (12–17 (GSGNWG)) interacts with NAD(+). Lysine 122 provides a ligand contact to substrate. Alanine 155 contacts NAD(+). Lysine 206 functions as the Proton acceptor in the catalytic mechanism. 3 residues coordinate NAD(+): arginine 271, lysine 298, and glutamine 300. 271–272 (RN) lines the substrate pocket.

The protein belongs to the NAD-dependent glycerol-3-phosphate dehydrogenase family. In terms of assembly, interacts with SCN5A.

The protein localises to the cytoplasm. It carries out the reaction sn-glycerol 3-phosphate + NAD(+) = dihydroxyacetone phosphate + NADH + H(+). Functionally, plays a role in regulating cardiac sodium current; decreased enzymatic activity with resulting increased levels of glycerol 3-phosphate activating the DPD1L-dependent SCN5A phosphorylation pathway, may ultimately lead to decreased sodium current; cardiac sodium current may also be reduced due to alterations of NAD(H) balance induced by DPD1L. In Pongo abelii (Sumatran orangutan), this protein is Glycerol-3-phosphate dehydrogenase 1-like protein (GPD1L).